Here is an 860-residue protein sequence, read N- to C-terminus: Leucine--tRNA ligase (860 aa).

Residues 42–52 carry the 'HIGH' region motif; sequence PYPSGRLHMGH. The short motif at 619 to 623 is the 'KMSKS' region element; sequence KMSKS. Lys622 contributes to the ATP binding site.

Belongs to the class-I aminoacyl-tRNA synthetase family.

It localises to the cytoplasm. It carries out the reaction tRNA(Leu) + L-leucine + ATP = L-leucyl-tRNA(Leu) + AMP + diphosphate. The protein is Leucine--tRNA ligase of Escherichia coli O127:H6 (strain E2348/69 / EPEC).